We begin with the raw amino-acid sequence, 190 residues long: dCTP deaminase (190 aa).

113–118 serves as a coordination point for dCTP; it reads KSTYAR. Catalysis depends on E139, which acts as the Proton donor/acceptor. Residues Q158, Y172, K181, and Q182 each coordinate dCTP.

This sequence belongs to the dCTP deaminase family. As to quaternary structure, homotrimer.

The catalysed reaction is dCTP + H2O + H(+) = dUTP + NH4(+). It participates in pyrimidine metabolism; dUMP biosynthesis; dUMP from dCTP (dUTP route): step 1/2. Catalyzes the deamination of dCTP to dUTP. The protein is dCTP deaminase of Chlamydia trachomatis serovar A (strain ATCC VR-571B / DSM 19440 / HAR-13).